Reading from the N-terminus, the 568-residue chain is Proline--tRNA ligase (568 aa).

This sequence belongs to the class-II aminoacyl-tRNA synthetase family. ProS type 1 subfamily. In terms of assembly, homodimer.

The protein localises to the cytoplasm. The enzyme catalyses tRNA(Pro) + L-proline + ATP = L-prolyl-tRNA(Pro) + AMP + diphosphate. Catalyzes the attachment of proline to tRNA(Pro) in a two-step reaction: proline is first activated by ATP to form Pro-AMP and then transferred to the acceptor end of tRNA(Pro). As ProRS can inadvertently accommodate and process non-cognate amino acids such as alanine and cysteine, to avoid such errors it has two additional distinct editing activities against alanine. One activity is designated as 'pretransfer' editing and involves the tRNA(Pro)-independent hydrolysis of activated Ala-AMP. The other activity is designated 'posttransfer' editing and involves deacylation of mischarged Ala-tRNA(Pro). The misacylated Cys-tRNA(Pro) is not edited by ProRS. The polypeptide is Proline--tRNA ligase (Halorhodospira halophila (strain DSM 244 / SL1) (Ectothiorhodospira halophila (strain DSM 244 / SL1))).